We begin with the raw amino-acid sequence, 110 residues long: Flagellar hook-basal body complex protein FliE (110 aa).

The protein belongs to the FliE family.

Its subcellular location is the bacterial flagellum basal body. This Bordetella petrii (strain ATCC BAA-461 / DSM 12804 / CCUG 43448) protein is Flagellar hook-basal body complex protein FliE.